Consider the following 812-residue polypeptide: Valine--tRNA ligase (812 aa).

The short motif at 46-56 is the 'HIGH' region element; the sequence is PTVSGQLHIGH. The short motif at 536 to 540 is the 'KMSKS' region element; it reads KMSKS. Residue Lys539 coordinates ATP.

Belongs to the class-I aminoacyl-tRNA synthetase family. ValS type 2 subfamily. As to quaternary structure, monomer.

The protein localises to the cytoplasm. It catalyses the reaction tRNA(Val) + L-valine + ATP = L-valyl-tRNA(Val) + AMP + diphosphate. Functionally, catalyzes the attachment of valine to tRNA(Val). As ValRS can inadvertently accommodate and process structurally similar amino acids such as threonine, to avoid such errors, it has a 'posttransfer' editing activity that hydrolyzes mischarged Thr-tRNA(Val) in a tRNA-dependent manner. This is Valine--tRNA ligase from Rickettsia akari (strain Hartford).